Consider the following 713-residue polypeptide: Polyribonucleotide nucleotidyltransferase (713 aa).

Residues Asp495 and Asp501 each coordinate Mg(2+). In terms of domain architecture, KH spans Pro562–Ile621. The S1 motif domain maps to Asp631–Arg700.

The protein belongs to the polyribonucleotide nucleotidyltransferase family. The cofactor is Mg(2+).

Its subcellular location is the cytoplasm. It carries out the reaction RNA(n+1) + phosphate = RNA(n) + a ribonucleoside 5'-diphosphate. Involved in mRNA degradation. Catalyzes the phosphorolysis of single-stranded polyribonucleotides processively in the 3'- to 5'-direction. In Gloeobacter violaceus (strain ATCC 29082 / PCC 7421), this protein is Polyribonucleotide nucleotidyltransferase.